A 300-amino-acid polypeptide reads, in one-letter code: Protein TRACHEARY ELEMENT DIFFERENTIATION-RELATED 7A (300 aa).

Residues 1-181 are disordered; the sequence is MASPLSQSVF…HIIPPPPPSP (181 aa). Residues 1–187 are Extracellular-facing; it reads MASPLSQSVF…PPSPSNHSTT (187 aa). Pro residues predominate over residues 12-181; that stretch reads HFPPPSPAAT…HIIPPPPPSP (170 aa). N-linked (GlcNAc...) asparagine glycosylation occurs at Asn-183. Residues 188–208 traverse the membrane as a helical segment; that stretch reads IVVIFVSCGGVFFLAFAMAAL. Residues 209–300 are Cytoplasmic-facing; it reads WCFLKKKKKK…SSFGHHYLHG (92 aa).

As to expression, accumulates in cells differentiating into tracheary element (TE) which undergo secondary cell wall (SCW) formation.

It is found in the cell membrane. It localises to the secreted. Its subcellular location is the cell wall. Its function is as follows. Involved in the secondary cell wall (SCW) formation of vessel elements (e.g. protoxylem and metaxylem), thus promoting tracheary element (TE) differentiation. This is Protein TRACHEARY ELEMENT DIFFERENTIATION-RELATED 7A from Zinnia elegans (Garden zinnia).